We begin with the raw amino-acid sequence, 49 residues long: Large ribosomal subunit protein bL33A (49 aa).

It belongs to the bacterial ribosomal protein bL33 family.

The chain is Large ribosomal subunit protein bL33A from Streptococcus pneumoniae (strain Hungary19A-6).